A 97-amino-acid polypeptide reads, in one-letter code: Co-chaperonin GroES (97 aa).

Belongs to the GroES chaperonin family. As to quaternary structure, heptamer of 7 subunits arranged in a ring. Interacts with the chaperonin GroEL.

The protein localises to the cytoplasm. Its function is as follows. Together with the chaperonin GroEL, plays an essential role in assisting protein folding. The GroEL-GroES system forms a nano-cage that allows encapsulation of the non-native substrate proteins and provides a physical environment optimized to promote and accelerate protein folding. GroES binds to the apical surface of the GroEL ring, thereby capping the opening of the GroEL channel. This is Co-chaperonin GroES from Blochmanniella pennsylvanica (strain BPEN).